Reading from the N-terminus, the 488-residue chain is MDLMHRTLLTALGALSVVYALVKFSLGYWKRRGILHEKPKFLWGNIKGVVSGKRHAQDALQDIYTAYKGRAPFVGFYACLKPFILALDLKLVHQIIFTDAGHFTSRGLYSNPSGEPLSHNLLQLDGHKWRSLHAKSAEVFTPANMQKLLVRLSQISSRIQRDLGEKSLQTINISELVGAYNTDVMASMAFGLVGQDNVEFAKWTRNYWADFRMWQAYLALEFPLIARLLQYKSYAEPATAYFQKVALSQLQLHRRRDRQPLQTFLQLYSNAEKPLTDIEIAGQAFGFVLAGLGPLNATLAFCLYELARQPEVQDRTRLEINKALEEHGGQVTPECLRELRYTKQVLNETLRLHTPHPFLLRRATKEFEVPGSVFVIAKGNNVLIPTAAIHMDPGIYENPQRFYPERFEEQARRSRPAAAFLPFGDGLRGCIAARFAEQQLLVGLVALLRQHRYAPSAETSIPVEYDNRRLLLMPKSDIKLSVERVDKL.

Cys-430 provides a ligand contact to heme.

It belongs to the cytochrome P450 family. Requires heme as cofactor.

It is found in the endoplasmic reticulum membrane. The protein resides in the microsome membrane. In terms of biological role, may be involved in the metabolism of insect hormones and in the breakdown of synthetic insecticides. The sequence is that of Probable cytochrome P450 6u1 (Cyp6u1) from Drosophila melanogaster (Fruit fly).